We begin with the raw amino-acid sequence, 241 residues long: Xyloglucan-specific endo-beta-1,4-glucanase 1 (241 aa).

Residues 1 to 19 form the signal peptide; it reads MKGFFAGVVAAATLAVASA. The active site involves Glu136. 2 N-linked (GlcNAc...) asparagine glycosylation sites follow: Asn174 and Asn190. Glu222 is an active-site residue.

Belongs to the glycosyl hydrolase 12 (cellulase H) family. In terms of assembly, interacts with host apoplastic glucanase inhibitor GIP1.

The protein resides in the secreted. It localises to the host. It carries out the reaction xyloglucan + H2O = xyloglucan oligosaccharides.. With respect to regulation, the xyloglucanase activity is inhibited by the binding of the host apoplastic glucanase inhibitor GIP1. Glycoside hydrolase that exhibits xyloglucanase activity. Acts as an important virulence factor during P.sojae infection but also acts as a pathogen-associated molecular pattern (PAMP) in soybean and solanaceous species, where it can trigger defense responses including cell death. XEG1-induced cell death can be suppressed by P.sojae RxLR effectors. The PAMP activity is independent of its xyloglucanase activity. XEG1 induces plant defense responses in a RLP kinase Serk3/Bak1-dependent manner in Nicotiana benthamiana. Moreover, the perception of XEG1 occurs independently of the perception of ethylene-inducing xylanase Eix2 in Tomato. With truncated paralog XLP1, is required to elevate apoplastic sugar during P.sojae infection. The protein is Xyloglucan-specific endo-beta-1,4-glucanase 1 of Phytophthora sojae (strain P6497) (Soybean stem and root rot agent).